We begin with the raw amino-acid sequence, 672 residues long: UvrABC system protein B (672 aa).

In terms of domain architecture, Helicase ATP-binding spans 26-181; it reads AGLEDGLAYQ…ILQRLAELQY (156 aa). 39-46 contacts ATP; it reads GVTGSGKT. Positions 92 to 115 match the Beta-hairpin motif; that stretch reads YYDYYQPEAYVPSSDTYIEKDASI. A Helicase C-terminal domain is found at 430 to 592; the sequence is QVDDLLSEIK…ITPKSIQKAV (163 aa). One can recognise a UVR domain in the interval 631–666; sequence AKELRKLEEQMYHHARNLEFEEAAAVRDKIQHIRKG.

It belongs to the UvrB family. In terms of assembly, forms a heterotetramer with UvrA during the search for lesions. Interacts with UvrC in an incision complex.

The protein resides in the cytoplasm. Functionally, the UvrABC repair system catalyzes the recognition and processing of DNA lesions. A damage recognition complex composed of 2 UvrA and 2 UvrB subunits scans DNA for abnormalities. Upon binding of the UvrA(2)B(2) complex to a putative damaged site, the DNA wraps around one UvrB monomer. DNA wrap is dependent on ATP binding by UvrB and probably causes local melting of the DNA helix, facilitating insertion of UvrB beta-hairpin between the DNA strands. Then UvrB probes one DNA strand for the presence of a lesion. If a lesion is found the UvrA subunits dissociate and the UvrB-DNA preincision complex is formed. This complex is subsequently bound by UvrC and the second UvrB is released. If no lesion is found, the DNA wraps around the other UvrB subunit that will check the other stand for damage. This is UvrABC system protein B from Coxiella burnetii (strain Dugway 5J108-111).